The chain runs to 324 residues: Acetyl-coenzyme A carboxylase carboxyl transferase subunit beta (324 aa).

One can recognise a CoA carboxyltransferase N-terminal domain in the interval Leu28–Pro297. Zn(2+) is bound by residues Cys32, Cys35, Cys51, and Cys54. A C4-type zinc finger spans residues Cys32–Cys54.

Belongs to the AccD/PCCB family. In terms of assembly, acetyl-CoA carboxylase is a heterohexamer composed of biotin carboxyl carrier protein (AccB), biotin carboxylase (AccC) and two subunits each of ACCase subunit alpha (AccA) and ACCase subunit beta (AccD). Zn(2+) is required as a cofactor.

The protein resides in the cytoplasm. The catalysed reaction is N(6)-carboxybiotinyl-L-lysyl-[protein] + acetyl-CoA = N(6)-biotinyl-L-lysyl-[protein] + malonyl-CoA. The protein operates within lipid metabolism; malonyl-CoA biosynthesis; malonyl-CoA from acetyl-CoA: step 1/1. In terms of biological role, component of the acetyl coenzyme A carboxylase (ACC) complex. Biotin carboxylase (BC) catalyzes the carboxylation of biotin on its carrier protein (BCCP) and then the CO(2) group is transferred by the transcarboxylase to acetyl-CoA to form malonyl-CoA. The protein is Acetyl-coenzyme A carboxylase carboxyl transferase subunit beta of Methylococcus capsulatus (strain ATCC 33009 / NCIMB 11132 / Bath).